The following is a 147-amino-acid chain: MAGKKAPYGEFAGRKLKLKRKKFRWSDIRYKRRVLRLKEKSDPLEGAPQAKGIVLEKIAVEAKQPNSAMRKAVRVQLIKNGKVVTAFTPGDGAINHIDEHDEVIIEGIGGPKGGSMGDIPGIRYKVVKVNRVSLKELVKGRKEKPRR.

It belongs to the universal ribosomal protein uS12 family. In terms of assembly, part of the 30S ribosomal subunit.

Functionally, with S4 and S5 plays an important role in translational accuracy. Located at the interface of the 30S and 50S subunits. The sequence is that of Small ribosomal subunit protein uS12 from Thermococcus celer.